The chain runs to 61 residues: Large ribosomal subunit protein uL30 (61 aa).

This sequence belongs to the universal ribosomal protein uL30 family. As to quaternary structure, part of the 50S ribosomal subunit.

This is Large ribosomal subunit protein uL30 from Corynebacterium efficiens (strain DSM 44549 / YS-314 / AJ 12310 / JCM 11189 / NBRC 100395).